Reading from the N-terminus, the 350-residue chain is tRNA uridine(34) hydroxylase (350 aa).

Positions 146–240 (DDPDALFIDM…YARKAREQGL (95 aa)) constitute a Rhodanese domain. C200 acts as the Cysteine persulfide intermediate in catalysis.

It belongs to the TrhO family.

The catalysed reaction is uridine(34) in tRNA + AH2 + O2 = 5-hydroxyuridine(34) in tRNA + A + H2O. In terms of biological role, catalyzes oxygen-dependent 5-hydroxyuridine (ho5U) modification at position 34 in tRNAs, the first step in 5-carboxymethoxyuridine (cmo5U) biosynthesis. May be part of an alternate pathway, which is able to bypass cmo5U biogenesis in a subset of tRNAs under aerobic conditions. This Escherichia coli (strain SMS-3-5 / SECEC) protein is tRNA uridine(34) hydroxylase.